Here is a 115-residue protein sequence, read N- to C-terminus: NADH-ubiquinone oxidoreductase chain 3 (115 aa).

A run of 3 helical transmembrane segments spans residues 5–25 (LTFM…FWLP), 55–75 (FFLV…LLPL), and 86–106 (LMLT…AYEW).

Belongs to the complex I subunit 3 family. Core subunit of respiratory chain NADH dehydrogenase (Complex I) which is composed of 45 different subunits. Interacts with TMEM186. Interacts with TMEM242.

It localises to the mitochondrion inner membrane. The enzyme catalyses a ubiquinone + NADH + 5 H(+)(in) = a ubiquinol + NAD(+) + 4 H(+)(out). In terms of biological role, core subunit of the mitochondrial membrane respiratory chain NADH dehydrogenase (Complex I) which catalyzes electron transfer from NADH through the respiratory chain, using ubiquinone as an electron acceptor. Essential for the catalytic activity of complex I. This chain is NADH-ubiquinone oxidoreductase chain 3, found in Avahi unicolor (Sambirano woolly lemur).